Here is a 207-residue protein sequence, read N- to C-terminus: Large ribosomal subunit protein uL4 (207 aa).

A disordered region spans residues Thr48–Val89.

This sequence belongs to the universal ribosomal protein uL4 family. Part of the 50S ribosomal subunit.

Its function is as follows. One of the primary rRNA binding proteins, this protein initially binds near the 5'-end of the 23S rRNA. It is important during the early stages of 50S assembly. It makes multiple contacts with different domains of the 23S rRNA in the assembled 50S subunit and ribosome. Forms part of the polypeptide exit tunnel. The sequence is that of Large ribosomal subunit protein uL4 from Bacillus cytotoxicus (strain DSM 22905 / CIP 110041 / 391-98 / NVH 391-98).